Reading from the N-terminus, the 270-residue chain is Interleukin-33 (270 aa).

Residues 1 to 65 (MKPKMKYSTN…EACYFRRETT (65 aa)) are homeodomain-like HTH domain. Positions 1–94 (MKPKMKYSTN…CQQQSTVECF (94 aa)) are excised as a propeptide. Positions 64–111 (TTKRPSLKTGRKHKRHLVLAACQQQSTVECFAFGISGVQKYTRALHDS) are interaction with RELA.

It belongs to the IL-1 family. Highly divergent. In terms of assembly, forms a 1:1:1 heterotrimeric complex with its primary high-affinity receptor IL1RL1 and the coreceptor IL1RAP. Interacts with cargo receptor TMED10; the interaction mediates the translocation from the cytoplasm into the ERGIC (endoplasmic reticulum-Golgi intermediate compartment) and thereby secretion. As to quaternary structure, (Microbial infection) Interacts (in reduced form) with H.polygyrus ARI. In terms of processing, the full-length protein can be released from cells and is able to signal via the IL1RL1/ST2 receptor. However, proteolytic processing by CELA1, CSTG/cathepsin G and ELANE/neutrophil elastase produces C-terminal peptides that are more active than the unprocessed full length protein. May also be proteolytically processed by calpains. Proteolytic cleavage mediated by apoptotic caspases including CASP3 and CASP7 results in IL33 inactivation. In vitro proteolytic cleavage by CASP1 was reported but could not be confirmed in vivo suggesting that IL33 is probably not a direct substrate for that caspase. As to expression, expressed at high level in high endothelial venules found in tonsils, Peyer patches and mesenteric lymph nodes. Almost undetectable in placenta.

It localises to the nucleus. It is found in the chromosome. Its subcellular location is the cytoplasm. The protein resides in the cytoplasmic vesicle. The protein localises to the secretory vesicle. It localises to the secreted. Cytokine that binds to and signals through the IL1RL1/ST2 receptor which in turn activates NF-kappa-B and MAPK signaling pathways in target cells. Involved in the maturation of Th2 cells inducing the secretion of T-helper type 2-associated cytokines. Also involved in activation of mast cells, basophils, eosinophils and natural killer cells. Acts as an enhancer of polarization of alternatively activated macrophages. Acts as a chemoattractant for Th2 cells, and may function as an 'alarmin', that amplifies immune responses during tissue injury. Induces rapid UCP2-dependent mitochondrial rewiring that attenuates the generation of reactive oxygen species and preserves the integrity of Krebs cycle required for persistent production of itaconate and subsequent GATA3-dependent differentiation of inflammation-resolving alternatively activated macrophages. In terms of biological role, in quiescent endothelia the uncleaved form is constitutively and abundantly expressed, and acts as a chromatin-associated nuclear factor with transcriptional repressor properties, it may sequester nuclear NF-kappaB/RELA, lowering expression of its targets. This form is rapidely lost upon angiogenic or pro-inflammatory activation. This is Interleukin-33 from Homo sapiens (Human).